The primary structure comprises 807 residues: Glycerol-3-phosphate acyltransferase (807 aa).

The HXXXXD motif signature appears at 305–310; the sequence is CHRSHM.

The protein belongs to the GPAT/DAPAT family.

It is found in the cell inner membrane. It carries out the reaction sn-glycerol 3-phosphate + an acyl-CoA = a 1-acyl-sn-glycero-3-phosphate + CoA. It functions in the pathway phospholipid metabolism; CDP-diacylglycerol biosynthesis; CDP-diacylglycerol from sn-glycerol 3-phosphate: step 1/3. The chain is Glycerol-3-phosphate acyltransferase from Klebsiella pneumoniae (strain 342).